We begin with the raw amino-acid sequence, 81 residues long: NAD(P)H-quinone oxidoreductase subunit L (81 aa).

2 consecutive transmembrane segments (helical) span residues 13-33 and 51-71; these read LLVIGAYGALGAAYLVVIPLF and LGIYGLVFLFFPGLILFAPFL.

The protein belongs to the complex I NdhL subunit family. In terms of assembly, NDH-1 can be composed of about 15 different subunits; different subcomplexes with different compositions have been identified which probably have different functions.

It is found in the cellular thylakoid membrane. It carries out the reaction a plastoquinone + NADH + (n+1) H(+)(in) = a plastoquinol + NAD(+) + n H(+)(out). It catalyses the reaction a plastoquinone + NADPH + (n+1) H(+)(in) = a plastoquinol + NADP(+) + n H(+)(out). NDH-1 shuttles electrons from an unknown electron donor, via FMN and iron-sulfur (Fe-S) centers, to quinones in the respiratory and/or the photosynthetic chain. The immediate electron acceptor for the enzyme in this species is believed to be plastoquinone. Couples the redox reaction to proton translocation, and thus conserves the redox energy in a proton gradient. Cyanobacterial NDH-1 also plays a role in inorganic carbon-concentration. The protein is NAD(P)H-quinone oxidoreductase subunit L of Synechococcus sp. (strain WH7803).